Reading from the N-terminus, the 125-residue chain is Barwin (125 aa).

The residue at position 1 (Gln1) is a Pyrrolidone carboxylic acid. In terms of domain architecture, Barwin spans Gln1–Asp125. Intrachain disulfides connect Cys31/Cys63, Cys52/Cys86, and Cys66/Cys123.

Its function is as follows. May be involved in a defense mechanism. Probable plant lectin. Binds weakly a chitin analog. This Hordeum vulgare (Barley) protein is Barwin.